The sequence spans 658 residues: L-type lectin-domain containing receptor kinase V.4 (658 aa).

An N-terminal signal peptide occupies residues 1-25 (MSRTIGSRVIFLILALFCCTENSRG). Residues 26–248 (KLVMQGSAGF…RAMHYMLSWF (223 aa)) are legume-lectin like. The Extracellular segment spans residues 26–280 (KLVMQGSAGF…EKSLVYRIVL (255 aa)). N-linked (GlcNAc...) asparagine glycosylation is found at Asn66 and Asn196. The helical transmembrane segment at 281–301 (VTSLALVLFVALVASALSIFF) threads the bilayer. The Cytoplasmic portion of the chain corresponds to 302–658 (YRRHKKVKEV…LTEPFTSRGR (357 aa)). In terms of domain architecture, Protein kinase spans 334 to 592 (KGFKQLLGKG…LGVLCSHQAV (259 aa)). ATP is bound by residues 340-348 (LGKGGFGQV) and Lys363. Asp460 functions as the Proton acceptor in the catalytic mechanism.

This sequence in the C-terminal section; belongs to the protein kinase superfamily. Ser/Thr protein kinase family. The protein in the N-terminal section; belongs to the leguminous lectin family.

The protein resides in the cell membrane. The catalysed reaction is L-seryl-[protein] + ATP = O-phospho-L-seryl-[protein] + ADP + H(+). It catalyses the reaction L-threonyl-[protein] + ATP = O-phospho-L-threonyl-[protein] + ADP + H(+). In terms of biological role, involved in resistance response to the pathogenic oomycetes Phytophthora infestans and Phytophthora capsici and to the pathogenic bacteria Pseudomonas syringae. The polypeptide is L-type lectin-domain containing receptor kinase V.4 (Arabidopsis thaliana (Mouse-ear cress)).